The following is a 53-amino-acid chain: Large ribosomal subunit protein eL24 (53 aa).

Zn(2+) contacts are provided by Cys-4, Cys-7, Cys-30, and Cys-34. A C4-type zinc finger spans residues 4-34 (CSFCHEEIEPGTGKMYVKRDGTIYFFCSSKC).

This sequence belongs to the eukaryotic ribosomal protein eL24 family. Part of the 50S ribosomal subunit. Forms a cluster with proteins L3 and L14. Zn(2+) is required as a cofactor.

In terms of biological role, binds to the 23S rRNA. The chain is Large ribosomal subunit protein eL24 from Methanothermobacter thermautotrophicus (strain ATCC 29096 / DSM 1053 / JCM 10044 / NBRC 100330 / Delta H) (Methanobacterium thermoautotrophicum).